The following is a 206-amino-acid chain: Large ribosomal subunit protein uL4 (206 aa).

The tract at residues 44–78 (RSGNRAQKDREQVKHTTKKPWRQKGTGRARAGMSS) is disordered. Positions 58-70 (HTTKKPWRQKGTG) are enriched in basic residues.

The protein belongs to the universal ribosomal protein uL4 family. As to quaternary structure, part of the 50S ribosomal subunit.

Functionally, one of the primary rRNA binding proteins, this protein initially binds near the 5'-end of the 23S rRNA. It is important during the early stages of 50S assembly. It makes multiple contacts with different domains of the 23S rRNA in the assembled 50S subunit and ribosome. Forms part of the polypeptide exit tunnel. This Paraburkholderia phytofirmans (strain DSM 17436 / LMG 22146 / PsJN) (Burkholderia phytofirmans) protein is Large ribosomal subunit protein uL4.